The sequence spans 86 residues: Putative membrane protein insertion efficiency factor (86 aa).

The disordered stretch occupies residues 64–86 (GVDPVPKKSSSKTSTTACGCGHS). Positions 70–79 (KKSSSKTSTT) are enriched in low complexity.

The protein belongs to the UPF0161 family.

The protein localises to the cell inner membrane. Its function is as follows. Could be involved in insertion of integral membrane proteins into the membrane. This chain is Putative membrane protein insertion efficiency factor, found in Janthinobacterium sp. (strain Marseille) (Minibacterium massiliensis).